The sequence spans 55 residues: Large ribosomal subunit protein bL33 (55 aa).

The protein belongs to the bacterial ribosomal protein bL33 family.

This is Large ribosomal subunit protein bL33 from Aeromonas hydrophila subsp. hydrophila (strain ATCC 7966 / DSM 30187 / BCRC 13018 / CCUG 14551 / JCM 1027 / KCTC 2358 / NCIMB 9240 / NCTC 8049).